The following is a 559-amino-acid chain: Hepatocyte nuclear factor 1-beta-A (559 aa).

The interval 1 to 35 (MFANMVSKLTSLQQELLSALLDSGVTKDVLLQALE) is dimerization. Residues 5–36 (MVSKLTSLQQELLSALLDSGVTKDVLLQALED) form the HNF-p1 domain. The tract at residues 53 to 98 (MSPSGSKLSDTDSKPVFHTLTNGHSKGKLSGDEGSEDGDDYDTPPI) is disordered. Residues 85–94 (EGSEDGDDYD) are compositionally biased toward acidic residues. One can recognise a POU-specific atypical domain in the interval 100 to 195 (KELQSQNTEE…ILRQFNQATQ (96 aa)). A DNA-binding region (homeobox; HNF1-type) is located at residues 240–320 (LRRNRFKWGP…NRRKEEAFRQ (81 aa)). Composition is skewed to low complexity over residues 334-354 (LNSL…SPPS) and 370-381 (TSSTTINHHSSN). Residues 334-384 (LNSLLSHSSPHHPQTSSSPPSKMQGVRYSQQGPGEVTSSTTINHHSSNAMS) are disordered.

This sequence belongs to the HNF1 homeobox family. As to quaternary structure, binds DNA as a dimer. Can form homodimer or heterodimer with HNF1-alpha. During embryonic development, expressed dynamically in the developing hindbrain, kidney (pronephros), gut, liver and pancreas; expressed in both intermediate mesoderm (precursor to the kidney) and the caudal hindbrain (including rhombomeres r5 and r6) at 10 hpf with expression diminishing caudally by 14 hpf. Strongly expressed in adult kidney, gut, liver and swim bladder; weakly expressed in brain, eye, testis, ovary and heart.

The protein resides in the nucleus. Its function is as follows. Transcription factor that binds to the inverted palindrome 5'-GTTAATNATTAAC-3'. Required for induction of rhombomere r5/r6 gene expression in the hindbrain. In Danio rerio (Zebrafish), this protein is Hepatocyte nuclear factor 1-beta-A (hnf1ba).